The chain runs to 198 residues: Protein GrpE (198 aa).

This sequence belongs to the GrpE family. In terms of assembly, homodimer.

It is found in the cytoplasm. Functionally, participates actively in the response to hyperosmotic and heat shock by preventing the aggregation of stress-denatured proteins, in association with DnaK and GrpE. It is the nucleotide exchange factor for DnaK and may function as a thermosensor. Unfolded proteins bind initially to DnaJ; upon interaction with the DnaJ-bound protein, DnaK hydrolyzes its bound ATP, resulting in the formation of a stable complex. GrpE releases ADP from DnaK; ATP binding to DnaK triggers the release of the substrate protein, thus completing the reaction cycle. Several rounds of ATP-dependent interactions between DnaJ, DnaK and GrpE are required for fully efficient folding. The protein is Protein GrpE of Lysinibacillus sphaericus (Bacillus sphaericus).